Consider the following 273-residue polypeptide: Thiazole synthase (273 aa).

Lysine 110 functions as the Schiff-base intermediate with DXP in the catalytic mechanism. Residues glycine 171, 198 to 199 (AG), and 220 to 221 (NS) contribute to the 1-deoxy-D-xylulose 5-phosphate site.

It belongs to the ThiG family. In terms of assembly, homotetramer. Forms heterodimers with either ThiH or ThiS.

It localises to the cytoplasm. It catalyses the reaction [ThiS sulfur-carrier protein]-C-terminal-Gly-aminoethanethioate + 2-iminoacetate + 1-deoxy-D-xylulose 5-phosphate = [ThiS sulfur-carrier protein]-C-terminal Gly-Gly + 2-[(2R,5Z)-2-carboxy-4-methylthiazol-5(2H)-ylidene]ethyl phosphate + 2 H2O + H(+). The protein operates within cofactor biosynthesis; thiamine diphosphate biosynthesis. In terms of biological role, catalyzes the rearrangement of 1-deoxy-D-xylulose 5-phosphate (DXP) to produce the thiazole phosphate moiety of thiamine. Sulfur is provided by the thiocarboxylate moiety of the carrier protein ThiS. In vitro, sulfur can be provided by H(2)S. The protein is Thiazole synthase of Hydrogenovibrio crunogenus (strain DSM 25203 / XCL-2) (Thiomicrospira crunogena).